A 289-amino-acid polypeptide reads, in one-letter code: Signal peptidase I (289 aa).

Residues 1–43 are Cytoplasmic-facing; the sequence is MKKLTSTTTTLWDNKLFINNLKNFMQTNTESNNNKTTAQEWKS. A helical membrane pass occupies residues 44–64; the sequence is FILVVVIALMIRILIIESFVV. At 65 to 289 the chain is on the periplasmic side; it reads PTGSMKATIL…IFRNLYSIED (225 aa). Residues S68 and K131 contribute to the active site.

This sequence belongs to the peptidase S26 family.

The protein resides in the cell inner membrane. It carries out the reaction Cleavage of hydrophobic, N-terminal signal or leader sequences from secreted and periplasmic proteins.. The chain is Signal peptidase I (lepB) from Rickettsia bellii (strain OSU 85-389).